The following is a 74-amino-acid chain: Sec-independent protein translocase protein TatA (74 aa).

Residues 1-21 (MGSMSWIHWVIVLGIVALLFG) form a helical membrane-spanning segment. Residues 51–74 (EVADNKAKSALPRTEAEAEELRKS) form a disordered region. Over residues 64–74 (TEAEAEELRKS) the composition is skewed to basic and acidic residues.

It belongs to the TatA/E family. As to quaternary structure, the Tat system comprises two distinct complexes: a TatABC complex, containing multiple copies of TatA, TatB and TatC subunits, and a separate TatA complex, containing only TatA subunits. Substrates initially bind to the TatABC complex, which probably triggers association of the separate TatA complex to form the active translocon.

The protein resides in the cell inner membrane. In terms of biological role, part of the twin-arginine translocation (Tat) system that transports large folded proteins containing a characteristic twin-arginine motif in their signal peptide across membranes. TatA could form the protein-conducting channel of the Tat system. This chain is Sec-independent protein translocase protein TatA, found in Caulobacter vibrioides (strain ATCC 19089 / CIP 103742 / CB 15) (Caulobacter crescentus).